A 94-amino-acid chain; its full sequence is Large ribosomal subunit protein uL23 (94 aa).

It belongs to the universal ribosomal protein uL23 family. Part of the 50S ribosomal subunit. Contacts protein L29, and trigger factor when it is bound to the ribosome.

Functionally, one of the early assembly proteins it binds 23S rRNA. One of the proteins that surrounds the polypeptide exit tunnel on the outside of the ribosome. Forms the main docking site for trigger factor binding to the ribosome. The protein is Large ribosomal subunit protein uL23 of Phytoplasma australiense.